Here is a 39-residue protein sequence, read N- to C-terminus: Photosystem II reaction center protein L (39 aa).

The chain crosses the membrane as a helical span at residues 16-37 (RTSLYLGLLLVAVLGILFSSYF).

It belongs to the PsbL family. PSII is composed of 1 copy each of membrane proteins PsbA, PsbB, PsbC, PsbD, PsbE, PsbF, PsbH, PsbI, PsbJ, PsbK, PsbL, PsbM, PsbT, PsbX, PsbY, PsbZ, Psb30/Ycf12, peripheral proteins PsbO, CyanoQ (PsbQ), PsbU, PsbV and a large number of cofactors. It forms dimeric complexes.

It localises to the cellular thylakoid membrane. One of the components of the core complex of photosystem II (PSII). PSII is a light-driven water:plastoquinone oxidoreductase that uses light energy to abstract electrons from H(2)O, generating O(2) and a proton gradient subsequently used for ATP formation. It consists of a core antenna complex that captures photons, and an electron transfer chain that converts photonic excitation into a charge separation. This subunit is found at the monomer-monomer interface and is required for correct PSII assembly and/or dimerization. Required for PSII activity, at least in part due to its effects on PSII assembly. May make specific contact(s) with lipids. The sequence is that of Photosystem II reaction center protein L from Synechocystis sp. (strain ATCC 27184 / PCC 6803 / Kazusa).